The chain runs to 464 residues: FERM domain-containing protein 8 (464 aa).

N-acetylmethionine is present on Met1. The disordered stretch occupies residues 1–22 (MDGTEGSAGQPGPAERSHRSSV). Position 24 is a phosphoserine (Ser24). One can recognise an FERM domain in the interval 30 to 376 (ADVLVYLADD…YCIELSQAAE (347 aa)). A disordered region spans residues 376–408 (EPAGPQDSATGSPSDPSSSLAPVQRPKLRRQGS). Phosphoserine is present on residues Ser383, Ser387, and Ser408. Thr419 bears the Phosphothreonine mark. Phosphoserine occurs at positions 439 and 446.

As to quaternary structure, interacts with iRhom1/RHBDF1 and iRhom2/RHBDF2 (via cytoplasmic N-termini); this interaction leads to mutual protein stabilization. Interacts with ADAM17; this interaction is indirect and mediated by iRhom proteins. Interacts with LRP6; this interaction affects LRP6-binding to AXIN1. In terms of tissue distribution, widely expressed, with high expression in heart and spleen.

The protein localises to the cytoplasm. The protein resides in the cytosol. Its subcellular location is the cell membrane. Promotes the cell surface stability of iRhom1/RHBDF1 and iRhom2/RHBDF2 and prevents their degradation via the endolysosomal pathway. By acting on iRhoms, involved in ADAM17-mediated shedding of TNF, amphiregulin/AREG, HBEGF and TGFA from the cell surface. Negatively regulates Wnt signaling, possibly by antagonizing the recruitment of AXIN1 to LRP6. The sequence is that of FERM domain-containing protein 8 (FRMD8) from Homo sapiens (Human).